We begin with the raw amino-acid sequence, 80 residues long: Turripeptide VI/VII-01 (80 aa).

The N-terminal stretch at 1–22 (MRLQLILTITLLLTSFMGYRDA) is a signal peptide. A propeptide spanning residues 23–36 (AVIQGKTERSAMKM) is cleaved from the precursor. Cystine bridges form between C48–C61, C50–C65, and C60–C70. The propeptide occupies 77–80 (SSAI).

Expressed by the venom duct.

It is found in the secreted. The sequence is that of Turripeptide VI/VII-01 from Gemmula speciosa (Splendid gem-turris).